A 951-amino-acid polypeptide reads, in one-letter code: Valine--tRNA ligase (951 aa).

The 'HIGH' region signature appears at 42-52 (PNVTGSLHMGH). The 'KMSKS' region motif lies at 554-558 (KMSKS). ATP is bound at residue Lys-557. Positions 882 to 944 (LINKDDELAR…AEAKAKLIEQ (63 aa)) form a coiled coil.

This sequence belongs to the class-I aminoacyl-tRNA synthetase family. ValS type 1 subfamily. As to quaternary structure, monomer.

It is found in the cytoplasm. The enzyme catalyses tRNA(Val) + L-valine + ATP = L-valyl-tRNA(Val) + AMP + diphosphate. Functionally, catalyzes the attachment of valine to tRNA(Val). As ValRS can inadvertently accommodate and process structurally similar amino acids such as threonine, to avoid such errors, it has a 'posttransfer' editing activity that hydrolyzes mischarged Thr-tRNA(Val) in a tRNA-dependent manner. The protein is Valine--tRNA ligase of Salmonella choleraesuis (strain SC-B67).